The sequence spans 482 residues: Aspartic proteinase 36 (482 aa).

The signal sequence occupies residues 1 to 27 (MVTTMDPSRISRIVAVVFVLVIQVVSG). Asn32 carries N-linked (GlcNAc...) asparagine glycosylation. One can recognise a Peptidase A1 domain in the interval 78–429 (YFTKIKLGSP…DLENEVIGWA (352 aa)). The active site involves Asp96. Residues Asn178, Asn204, and Asn226 are each glycosylated (N-linked (GlcNAc...) asparagine). Asp310 is an active-site residue. Cysteines 347 and 388 form a disulfide. Asn432 carries N-linked (GlcNAc...) asparagine glycosylation. Ser456 is lipidated: GPI-anchor amidated serine. A propeptide spans 457 to 482 (AASSVMNGTLVTLLSILIWVFHSFTS) (removed in mature form). Asn463 carries N-linked (GlcNAc...) asparagine glycosylation.

The protein belongs to the peptidase A1 family. As to expression, highly expressed in pollen and pollen tubes. Mostly expressed in roots, flowers and inflorescence, and at lower levels in stems, seedlings and siliques.

It is found in the cell membrane. The protein localises to the cytoplasm. The protein resides in the cytosol. In terms of biological role, displays aspartic proteolytic activity. Together with A39, contributes to pollen and ovule development, including the apical cell wall constitution of the growing pollen tubes. The sequence is that of Aspartic proteinase 36 from Arabidopsis thaliana (Mouse-ear cress).